Reading from the N-terminus, the 527-residue chain is EGF domain-specific O-linked N-acetylglucosamine transferase (527 aa).

An N-terminal signal peptide occupies residues 1–17 (MFMLLVFGALLPEVPLS). The Required for optimal activity signature appears at 295-297 (DYD). The N-linked (GlcNAc...) asparagine glycan is linked to Asn354. Positions 524 to 527 (HDEL) match the Prevents secretion from ER motif.

This sequence belongs to the glycosyltransferase 61 family.

The protein resides in the endoplasmic reticulum lumen. It carries out the reaction L-seryl-[protein] + UDP-N-acetyl-alpha-D-glucosamine = 3-O-(N-acetyl-beta-D-glucosaminyl)-L-seryl-[protein] + UDP + H(+). The enzyme catalyses L-threonyl-[protein] + UDP-N-acetyl-alpha-D-glucosamine = 3-O-(N-acetyl-beta-D-glucosaminyl)-L-threonyl-[protein] + UDP + H(+). Functionally, catalyzes the transfer of a single N-acetylglucosamine from UDP-GlcNAc to a serine or threonine residue in extracellular proteins resulting in their modification with a beta-linked N-acetylglucosamine (O-GlcNAc). Specifically glycosylates the Thr residue located between the fifth and sixth conserved cysteines of folded EGF-like domains. The sequence is that of EGF domain-specific O-linked N-acetylglucosamine transferase (EOGT) from Bos taurus (Bovine).